The chain runs to 147 residues: Small ribosomal subunit protein uS12 (147 aa).

It belongs to the universal ribosomal protein uS12 family. In terms of assembly, part of the 30S ribosomal subunit.

Its function is as follows. With S4 and S5 plays an important role in translational accuracy. Located at the interface of the 30S and 50S subunits. In Sulfurisphaera tokodaii (strain DSM 16993 / JCM 10545 / NBRC 100140 / 7) (Sulfolobus tokodaii), this protein is Small ribosomal subunit protein uS12.